Here is a 199-residue protein sequence, read N- to C-terminus: Peptidyl-tRNA hydrolase (199 aa).

Tyr-18 contributes to the tRNA binding site. The Proton acceptor role is filled by His-23. The tRNA site is built by Tyr-72, Asn-74, and Asn-120.

Belongs to the PTH family. Monomer.

It is found in the cytoplasm. The catalysed reaction is an N-acyl-L-alpha-aminoacyl-tRNA + H2O = an N-acyl-L-amino acid + a tRNA + H(+). Functionally, hydrolyzes ribosome-free peptidyl-tRNAs (with 1 or more amino acids incorporated), which drop off the ribosome during protein synthesis, or as a result of ribosome stalling. Catalyzes the release of premature peptidyl moieties from peptidyl-tRNA molecules trapped in stalled 50S ribosomal subunits, and thus maintains levels of free tRNAs and 50S ribosomes. In Bifidobacterium adolescentis (strain ATCC 15703 / DSM 20083 / NCTC 11814 / E194a), this protein is Peptidyl-tRNA hydrolase.